The sequence spans 524 residues: Citrate exporter 1 (524 aa).

Residues 1-49 are disordered; sequence MSSTTSSSRSDLEKVPVPQVTPRDSDSDKGSLSPEPSTLEAQSSEKPPH. Positions 34–45 are enriched in polar residues; that stretch reads PEPSTLEAQSSE. Residues 60-80 traverse the membrane as a helical segment; sequence MVCIVSLAAIFSPLSSNIYFP. N-linked (GlcNAc...) asparagine glycosylation is present at N90. 5 helical membrane-spanning segments follow: residues 95-115, 125-145, 155-175, 186-206, and 215-235; these read LATL…SFWG, PVFI…AESK, ALQA…IGDI, GIFG…GGIF, and IFWF…VLLP. A glycan (N-linked (GlcNAc...) asparagine) is linked at N244. Transmembrane regions (helical) follow at residues 296–316, 332–352, 395–415, 417–437, 459–479, and 481–501; these read VFIT…VTSS, IGLT…LVGY, TWWV…SLRT, LAVP…LFTI, LMRC…LDAL, and PDYT…LLYV.

Belongs to the major facilitator superfamily.

It is found in the cell membrane. The catalysed reaction is citrate(in) = citrate(out). Transmembrane transporter that exports citrate across the cell membrane. This chain is Citrate exporter 1, found in Aspergillus niger (strain ATCC 1015 / CBS 113.46 / FGSC A1144 / LSHB Ac4 / NCTC 3858a / NRRL 328 / USDA 3528.7).